The chain runs to 278 residues: S-formylglutathione hydrolase YeiG (278 aa).

Residues serine 145, aspartate 223, and histidine 256 each act as charge relay system in the active site.

Belongs to the esterase D family.

The enzyme catalyses S-formylglutathione + H2O = formate + glutathione + H(+). In terms of biological role, serine hydrolase involved in the detoxification of formaldehyde. Hydrolyzes S-formylglutathione to glutathione and formate. The sequence is that of S-formylglutathione hydrolase YeiG (yeiG) from Escherichia coli (strain UTI89 / UPEC).